The chain runs to 77 residues: Large ribosomal subunit protein bL31 (77 aa).

Belongs to the bacterial ribosomal protein bL31 family. Type A subfamily. In terms of assembly, part of the 50S ribosomal subunit.

Binds the 23S rRNA. The chain is Large ribosomal subunit protein bL31 from Microcystis aeruginosa (strain NIES-843 / IAM M-2473).